Here is a 211-residue protein sequence, read N- to C-terminus: Probable nicotinate-nucleotide adenylyltransferase (211 aa).

This sequence belongs to the NadD family.

The enzyme catalyses nicotinate beta-D-ribonucleotide + ATP + H(+) = deamido-NAD(+) + diphosphate. It participates in cofactor biosynthesis; NAD(+) biosynthesis; deamido-NAD(+) from nicotinate D-ribonucleotide: step 1/1. Its function is as follows. Catalyzes the reversible adenylation of nicotinate mononucleotide (NaMN) to nicotinic acid adenine dinucleotide (NaAD). This Gemmatimonas aurantiaca (strain DSM 14586 / JCM 11422 / NBRC 100505 / T-27) protein is Probable nicotinate-nucleotide adenylyltransferase.